The chain runs to 212 residues: Thylakoid membrane protein slr1949 (212 aa).

Residues 109 to 131 (WVQDGLLLLLALGLCGISGYRLW) form a helical membrane-spanning segment. Residues 180–212 (PNRRQRKQYETRLQALRQSAAKMKAKTQKAKAL) adopt a coiled-coil conformation.

The protein localises to the cellular thylakoid membrane. The polypeptide is Thylakoid membrane protein slr1949 (Synechocystis sp. (strain ATCC 27184 / PCC 6803 / Kazusa)).